Here is a 345-residue protein sequence, read N- to C-terminus: Ferrochelatase (345 aa).

Fe cation is bound by residues His-215 and Glu-296.

Belongs to the ferrochelatase family.

It is found in the cytoplasm. The catalysed reaction is heme b + 2 H(+) = protoporphyrin IX + Fe(2+). It participates in porphyrin-containing compound metabolism; protoheme biosynthesis; protoheme from protoporphyrin-IX: step 1/1. Functionally, catalyzes the ferrous insertion into protoporphyrin IX. The protein is Ferrochelatase of Rhodopseudomonas palustris (strain BisB5).